The following is a 543-amino-acid chain: Carotenoid 9,10(9',10')-cleavage dioxygenase 1 (543 aa).

Positions 224, 272, 338, and 528 each coordinate Fe cation.

The protein belongs to the carotenoid oxygenase family. Homodimer. Fe(2+) is required as a cofactor.

It catalyses the reaction all-trans-zeaxanthin + 2 O2 = 4,9-dimethyldodeca-2,4,6,8,10-pentaenedial + 2 (3R)-hydroxy-beta-ionone. Functionally, cleaves a variety of carotenoids at the 9-10 and 9'-10' double bonds. Probably not involved in abscisic acid biosynthesis. The chain is Carotenoid 9,10(9',10')-cleavage dioxygenase 1 (CCD1) from Phaseolus vulgaris (Kidney bean).